Here is a 467-residue protein sequence, read N- to C-terminus: MSILLFGVSHRSAPVSVLEQLSLDRSDQIKIVDRVLQSPLVTEAMVLSTCNRVEVYAVVEAFHAGLSVIGQVLSEYSAMSIGDLTKYAYVRYSEAAVEHLFTVASGLDSAVVGEQQVLGQVRRAYAAAEANRTVGQVLHEVAQRALSVGKRVHSETAIDAAGVSVVSVALGIAGRTLGGLAGRIAVVIGAGAMGALSSSYLTQANVGRIHVLNRSLSRARRLAGKIGESGVPADVWTLNHLDEALADADLVVSCTGAVSPVVSLADVHHALAAMRRDETTRPLVICDLGMPRDVDPAVAKLPGVWVVDVEGVQREPSARASAADVDAARRIVAAEVATYLTRQRMAEVAPTVTALRQRAADVVEAELLRLDHRLPGLESAQREEVARTVRRVVDKLLHAPTVRIKQLASAPGGDSYTEALRELFELDQTAVDAVATAGELPVMVSGFSDTTRYGTSPAQSSSKYHAE.

Substrate-binding positions include 49 to 52 (TCNR), Ser-109, 114 to 116 (EQQ), and Gln-120. Cys-50 acts as the Nucleophile in catalysis. 189-194 (GAGAMG) provides a ligand contact to NADP(+). Residues 446–467 (GFSDTTRYGTSPAQSSSKYHAE) are disordered. Residues 447 to 467 (FSDTTRYGTSPAQSSSKYHAE) are compositionally biased toward polar residues.

The protein belongs to the glutamyl-tRNA reductase family. As to quaternary structure, homodimer.

The enzyme catalyses (S)-4-amino-5-oxopentanoate + tRNA(Glu) + NADP(+) = L-glutamyl-tRNA(Glu) + NADPH + H(+). The protein operates within porphyrin-containing compound metabolism; protoporphyrin-IX biosynthesis; 5-aminolevulinate from L-glutamyl-tRNA(Glu): step 1/2. In terms of biological role, catalyzes the NADPH-dependent reduction of glutamyl-tRNA(Glu) to glutamate 1-semialdehyde (GSA). The polypeptide is Glutamyl-tRNA reductase (Mycobacterium leprae (strain TN)).